We begin with the raw amino-acid sequence, 119 residues long: Large ribosomal subunit protein bL19 (119 aa).

It belongs to the bacterial ribosomal protein bL19 family.

In terms of biological role, this protein is located at the 30S-50S ribosomal subunit interface and may play a role in the structure and function of the aminoacyl-tRNA binding site. This chain is Large ribosomal subunit protein bL19, found in Pseudoalteromonas translucida (strain TAC 125).